The sequence spans 454 residues: Probable tRNA methyltransferase 9B (454 aa).

A Phosphoserine modification is found at Ser214.

The protein belongs to the methyltransferase superfamily. In terms of tissue distribution, down-regulated in breast, bladder, colorectal, cervix and testicular carcinomas.

Functionally, may modify wobble uridines in specific arginine and glutamic acid tRNAs. Acts as a tumor suppressor by promoting the expression of LIN9. This is Probable tRNA methyltransferase 9B from Homo sapiens (Human).